Consider the following 364-residue polypeptide: Aminomethyltransferase (364 aa).

It belongs to the GcvT family. As to quaternary structure, the glycine cleavage system is composed of four proteins: P, T, L and H.

The enzyme catalyses N(6)-[(R)-S(8)-aminomethyldihydrolipoyl]-L-lysyl-[protein] + (6S)-5,6,7,8-tetrahydrofolate = N(6)-[(R)-dihydrolipoyl]-L-lysyl-[protein] + (6R)-5,10-methylene-5,6,7,8-tetrahydrofolate + NH4(+). Functionally, the glycine cleavage system catalyzes the degradation of glycine. The sequence is that of Aminomethyltransferase from Escherichia coli O157:H7.